Here is a 292-residue protein sequence, read N- to C-terminus: 4'-phosphopantetheinyl transferase 1 (292 aa).

It belongs to the P-Pant transferase superfamily.

It catalyses the reaction apo-[ACP] + CoA = holo-[ACP] + adenosine 3',5'-bisphosphate + H(+). Functionally, transfers the 4'-phosphopantetheine moiety from coenzyme A to a Ser of an acyl-carrier-protein. The enzyme is able to transfer the cofactor to a broad range of enzymes with acyl- or peptidyl-carrier protein domains. Required for primary biological processes such as growth and asexual/sexual development, and activates target enzymes involved in the synthesis of metabolites such as fatty acids, nonribosomal peptides and polyketides such as the gamma-pyrones fusapyrone (FPY) and deoxyfusapyrone (dFPY). In Fusarium mangiferae (Mango malformation disease fungus), this protein is 4'-phosphopantetheinyl transferase 1.